The primary structure comprises 177 residues: Large ribosomal subunit protein uL6 (177 aa).

This sequence belongs to the universal ribosomal protein uL6 family. As to quaternary structure, part of the 50S ribosomal subunit.

This protein binds to the 23S rRNA, and is important in its secondary structure. It is located near the subunit interface in the base of the L7/L12 stalk, and near the tRNA binding site of the peptidyltransferase center. The chain is Large ribosomal subunit protein uL6 from Cronobacter sakazakii (strain ATCC BAA-894) (Enterobacter sakazakii).